Here is a 79-residue protein sequence, read N- to C-terminus: Small ribosomal subunit protein bS18 (79 aa).

This sequence belongs to the bacterial ribosomal protein bS18 family. In terms of assembly, part of the 30S ribosomal subunit. Forms a tight heterodimer with protein bS6.

Binds as a heterodimer with protein bS6 to the central domain of the 16S rRNA, where it helps stabilize the platform of the 30S subunit. The chain is Small ribosomal subunit protein bS18 from Bacillus pumilus (strain SAFR-032).